We begin with the raw amino-acid sequence, 325 residues long: Foldase protein PrsA (325 aa).

Positions 1-20 (MKLMNKIIVPVTASALLLGA) are cleaved as a signal peptide. Cys21 carries the N-palmitoyl cysteine lipid modification. A lipid anchor (S-diacylglycerol cysteine) is attached at Cys21. The 107-residue stretch at 139 to 245 (ENSKKASHIL…YGYHIIKADK (107 aa)) folds into the PpiC domain. 2 disordered regions span residues 159 to 202 (EGLS…KKDG) and 303 to 325 (PDKI…NSGS).

Belongs to the PrsA family.

It is found in the cell membrane. The catalysed reaction is [protein]-peptidylproline (omega=180) = [protein]-peptidylproline (omega=0). Its function is as follows. Plays a major role in protein secretion by helping the post-translocational extracellular folding of several secreted proteins. In Staphylococcus epidermidis (strain ATCC 12228 / FDA PCI 1200), this protein is Foldase protein PrsA.